Here is a 156-residue protein sequence, read N- to C-terminus: Small ribosomal subunit protein uS7 (156 aa).

This sequence belongs to the universal ribosomal protein uS7 family. In terms of assembly, part of the 30S ribosomal subunit. Contacts proteins S9 and S11.

Functionally, one of the primary rRNA binding proteins, it binds directly to 16S rRNA where it nucleates assembly of the head domain of the 30S subunit. Is located at the subunit interface close to the decoding center, probably blocks exit of the E-site tRNA. The chain is Small ribosomal subunit protein uS7 from Treponema denticola (strain ATCC 35405 / DSM 14222 / CIP 103919 / JCM 8153 / KCTC 15104).